The chain runs to 307 residues: UDP-N-acetylenolpyruvoylglucosamine reductase (307 aa).

The 169-residue stretch at 29–197 (RVGGPAEWFA…LSARFRLDPG (169 aa)) folds into the FAD-binding PCMH-type domain. Arg176 is an active-site residue. Catalysis depends on Ser227, which acts as the Proton donor. The active site involves Glu297.

It belongs to the MurB family. The cofactor is FAD.

Its subcellular location is the cytoplasm. It catalyses the reaction UDP-N-acetyl-alpha-D-muramate + NADP(+) = UDP-N-acetyl-3-O-(1-carboxyvinyl)-alpha-D-glucosamine + NADPH + H(+). The protein operates within cell wall biogenesis; peptidoglycan biosynthesis. Cell wall formation. The sequence is that of UDP-N-acetylenolpyruvoylglucosamine reductase from Prochlorococcus marinus (strain MIT 9313).